The following is a 932-amino-acid chain: Transcriptional regulatory protein DagR (932 aa).

Residues 111 to 343 (LIGYDRSLRD…LKSDIQFLCA (233 aa)) enclose the Sigma-54 factor interaction domain. Residues 141 to 148 (GPSGVGKT) and 210 to 219 (ADGGYLLLDE) each bind ATP. Residues 462–567 (RYGDQIEERV…KECRHYRQRI (106 aa)) enclose the PRD 1 domain. Residue His497 is modified to Phosphohistidine. In terms of domain architecture, PTS EIIA type-4 spans 572–708 (DCGVILIAHG…PQQENGGKVL (137 aa)). His580 functions as the Tele-phosphohistidine intermediate in the catalytic mechanism. Positions 835 to 932 (LNPQRILKEM…YFYIYELLYS (98 aa)) constitute a PRD 2 domain. His870 carries the phosphohistidine modification.

Involved in the regulation of the catabolism of D-glucosaminate. This Salmonella typhimurium (strain 14028s / SGSC 2262) protein is Transcriptional regulatory protein DagR (dgaR).